The sequence spans 355 residues: 1D-myo-inositol 2-acetamido-2-deoxy-alpha-D-glucopyranoside deacetylase 3 (355 aa).

3 residues coordinate Zn(2+): His31, Asp34, and His169.

It belongs to the MshB deacetylase family. The cofactor is Zn(2+).

The enzyme catalyses 1D-myo-inositol 2-acetamido-2-deoxy-alpha-D-glucopyranoside + H2O = 1D-myo-inositol 2-amino-2-deoxy-alpha-D-glucopyranoside + acetate. In terms of biological role, catalyzes the deacetylation of 1D-myo-inositol 2-acetamido-2-deoxy-alpha-D-glucopyranoside (GlcNAc-Ins) in the mycothiol biosynthesis pathway. The sequence is that of 1D-myo-inositol 2-acetamido-2-deoxy-alpha-D-glucopyranoside deacetylase 3 from Catenulispora acidiphila (strain DSM 44928 / JCM 14897 / NBRC 102108 / NRRL B-24433 / ID139908).